The chain runs to 505 residues: Glycerol kinase (505 aa).

Position 17 (T17) interacts with ADP. The ATP site is built by T17, T18, and S19. T17 provides a ligand contact to sn-glycerol 3-phosphate. R21 contributes to the ADP binding site. Positions 87, 88, 139, and 250 each coordinate sn-glycerol 3-phosphate. Residues R87, E88, Y139, D250, and Q251 each coordinate glycerol. 2 residues coordinate ADP: T272 and G315. Residues T272, G315, Q319, and G416 each coordinate ATP. 2 residues coordinate ADP: G416 and N420.

It belongs to the FGGY kinase family.

The enzyme catalyses glycerol + ATP = sn-glycerol 3-phosphate + ADP + H(+). The protein operates within polyol metabolism; glycerol degradation via glycerol kinase pathway; sn-glycerol 3-phosphate from glycerol: step 1/1. With respect to regulation, inhibited by fructose 1,6-bisphosphate (FBP). Functionally, key enzyme in the regulation of glycerol uptake and metabolism. Catalyzes the phosphorylation of glycerol to yield sn-glycerol 3-phosphate. The protein is Glycerol kinase of Azotobacter vinelandii (strain DJ / ATCC BAA-1303).